A 903-amino-acid chain; its full sequence is Probable leucine--tRNA ligase, mitochondrial (903 aa).

N6-acetyllysine is present on K68. The 'HIGH' region signature appears at 92-102 (YPSGKLHMGHV). K236 carries the post-translational modification N6-acetyllysine. The short motif at 639–643 (KMSKS) is the 'KMSKS' region element. K642 contacts ATP. S711 is subject to Phosphoserine.

The protein belongs to the class-I aminoacyl-tRNA synthetase family.

It is found in the mitochondrion matrix. The catalysed reaction is tRNA(Leu) + L-leucine + ATP = L-leucyl-tRNA(Leu) + AMP + diphosphate. The chain is Probable leucine--tRNA ligase, mitochondrial (LARS2) from Pongo abelii (Sumatran orangutan).